The primary structure comprises 377 residues: Nitric oxide reductase FlRd-NAD(+) reductase (377 aa).

The protein belongs to the FAD-dependent oxidoreductase family. It depends on FAD as a cofactor.

Its subcellular location is the cytoplasm. It carries out the reaction 2 reduced [nitric oxide reductase rubredoxin domain] + NAD(+) + H(+) = 2 oxidized [nitric oxide reductase rubredoxin domain] + NADH. Its pathway is nitrogen metabolism; nitric oxide reduction. Its function is as follows. One of at least two accessory proteins for anaerobic nitric oxide (NO) reductase. Reduces the rubredoxin moiety of NO reductase. This chain is Nitric oxide reductase FlRd-NAD(+) reductase, found in Escherichia coli O6:H1 (strain CFT073 / ATCC 700928 / UPEC).